We begin with the raw amino-acid sequence, 417 residues long: Actin-like protein 7B (417 aa).

The disordered stretch occupies residues 1–39 (MATKNNPSPKPMGTAQGDPGEAGTLPAPEAGIRDTGSTQ). Residue Ser8 is modified to Phosphoserine.

The protein belongs to the actin family.

The protein localises to the cytoplasm. It localises to the cytoskeleton. This is Actin-like protein 7B (Actl7b) from Rattus norvegicus (Rat).